Reading from the N-terminus, the 281-residue chain is MTQSEPPSLPLYSPARVRDLLTRHGLRPTKSLGQNFLIDGNILRAIAQAGGAAPGVPVLEVGPGLGVLTRELAARGAHVTALEKDERLRPVLAETLAGQDVQVVWGDALEFDYASLPAGTRVIANLPYYITGPLLARFMQAPGIISATVLVQKEVAGRLAARPGEDNYGFLSALAALYGTVQHVRDVPKGAFLPAPDVTSSVVRLDFDRARPAPEPAFLKFVEAALHHRRKTLRNNLRLAGFGGEAVGEALMAAGLRPDVRAEDVPLEDLRVLARRLGVLR.

Positions 35, 37, 62, 83, 107, and 125 each coordinate S-adenosyl-L-methionine.

The protein belongs to the class I-like SAM-binding methyltransferase superfamily. rRNA adenine N(6)-methyltransferase family. RsmA subfamily.

It is found in the cytoplasm. The enzyme catalyses adenosine(1518)/adenosine(1519) in 16S rRNA + 4 S-adenosyl-L-methionine = N(6)-dimethyladenosine(1518)/N(6)-dimethyladenosine(1519) in 16S rRNA + 4 S-adenosyl-L-homocysteine + 4 H(+). Functionally, specifically dimethylates two adjacent adenosines (A1518 and A1519) in the loop of a conserved hairpin near the 3'-end of 16S rRNA in the 30S particle. May play a critical role in biogenesis of 30S subunits. In Deinococcus geothermalis (strain DSM 11300 / CIP 105573 / AG-3a), this protein is Ribosomal RNA small subunit methyltransferase A.